The sequence spans 207 residues: Thymidine kinase (207 aa).

Residues 15–22 and 88–91 contribute to the ATP site; these read GCMFSGKS and DEIQ. The active-site Proton acceptor is the Glu-89. Residues Cys-145, Cys-148, Cys-183, and His-186 each coordinate Zn(2+). The span at 184 to 198 shows a compositional bias: basic residues; that stretch reads RHHHEVPGKPKKRYN. Positions 184–207 are disordered; the sequence is RHHHEVPGKPKKRYNHPLAGHTGE.

Belongs to the thymidine kinase family. In terms of assembly, homotetramer.

It is found in the cytoplasm. It carries out the reaction thymidine + ATP = dTMP + ADP + H(+). In Geobacillus kaustophilus (strain HTA426), this protein is Thymidine kinase.